The following is a 118-amino-acid chain: MPRAKTGIVRRRRHKKVLKRAKGFWGSRSKQYRNAFQTLLNAATYEYRDRRNKKRDFRRLWIQRINAGARLHGMNYSTFINGLKRANIDLNRKVLADIAAREPEAFKALVDASRNARQ.

This sequence belongs to the bacterial ribosomal protein bL20 family. In terms of assembly, part of the 50S ribosomal subunit. Contacts proteins L13 and L21.

Its function is as follows. Binds directly to 23S rRNA, probably serving to organize its structure. This Deinococcus radiodurans (strain ATCC 13939 / DSM 20539 / JCM 16871 / CCUG 27074 / LMG 4051 / NBRC 15346 / NCIMB 9279 / VKM B-1422 / R1) protein is Large ribosomal subunit protein bL20 (rplT).